A 325-amino-acid polypeptide reads, in one-letter code: Large ribosomal subunit protein uL1m (325 aa).

The transit peptide at 1–50 directs the protein to the mitochondrion; that stretch reads MAAAVRCMGRALIHHQRHSLSKMVYQTSLCSCSVNIRVPNRHFAAATKSA.

Belongs to the universal ribosomal protein uL1 family. In terms of assembly, component of the mitochondrial large ribosomal subunit (mt-LSU). Mature mammalian 55S mitochondrial ribosomes consist of a small (28S) and a large (39S) subunit. The 28S small subunit contains a 12S ribosomal RNA (12S mt-rRNA) and 30 different proteins. The 39S large subunit contains a 16S rRNA (16S mt-rRNA), a copy of mitochondrial valine transfer RNA (mt-tRNA(Val)), which plays an integral structural role, and 52 different proteins.

The protein localises to the mitochondrion. The chain is Large ribosomal subunit protein uL1m (MRPL1) from Homo sapiens (Human).